Reading from the N-terminus, the 425-residue chain is Enolase (425 aa).

Position 163 (Gln163) interacts with (2R)-2-phosphoglycerate. The Proton donor role is filled by Glu205. Mg(2+) contacts are provided by Asp242, Glu285, and Asp312. 4 residues coordinate (2R)-2-phosphoglycerate: Lys337, Arg366, Ser367, and Lys388. The active-site Proton acceptor is Lys337.

This sequence belongs to the enolase family. It depends on Mg(2+) as a cofactor.

It is found in the cytoplasm. It localises to the secreted. The protein resides in the cell surface. The catalysed reaction is (2R)-2-phosphoglycerate = phosphoenolpyruvate + H2O. The protein operates within carbohydrate degradation; glycolysis; pyruvate from D-glyceraldehyde 3-phosphate: step 4/5. Its function is as follows. Catalyzes the reversible conversion of 2-phosphoglycerate (2-PG) into phosphoenolpyruvate (PEP). It is essential for the degradation of carbohydrates via glycolysis. This Jannaschia sp. (strain CCS1) protein is Enolase.